Reading from the N-terminus, the 155-residue chain is RING finger protein 122 (155 aa).

Residues 40 to 60 (VIFGTGIFVFMLSLIFCCYFI) traverse the membrane as a helical segment. Residues 93 to 134 (CAVCLEDFKGKDELGVLPCQHAFHRKCLVKWLEVRCVCPMCN) form an RING-type; atypical zinc finger.

In terms of tissue distribution, widely expressed in several tissues and cell lines.

The protein localises to the golgi apparatus. Its subcellular location is the endoplasmic reticulum. The protein resides in the membrane. May induce necrosis and apoptosis. May play a role in cell viability. This is RING finger protein 122 (RNF122) from Homo sapiens (Human).